We begin with the raw amino-acid sequence, 460 residues long: tRNA modification GTPase MnmE (460 aa).

Residues arginine 29, glutamate 91, and lysine 132 each coordinate (6S)-5-formyl-5,6,7,8-tetrahydrofolate. The TrmE-type G domain maps to 227–383 (GISIALIGKT…LIDTIIKKCG (157 aa)). Asparagine 237 contacts K(+). Residues 237 to 242 (NVGKSS), 256 to 262 (TNIPGTT), and 281 to 284 (DTAG) each bind GTP. Residue serine 241 coordinates Mg(2+). Positions 256, 258, and 261 each coordinate K(+). Position 262 (threonine 262) interacts with Mg(2+). Residue lysine 460 participates in (6S)-5-formyl-5,6,7,8-tetrahydrofolate binding.

Belongs to the TRAFAC class TrmE-Era-EngA-EngB-Septin-like GTPase superfamily. TrmE GTPase family. In terms of assembly, homodimer. Heterotetramer of two MnmE and two MnmG subunits. The cofactor is K(+).

It is found in the cytoplasm. Exhibits a very high intrinsic GTPase hydrolysis rate. Involved in the addition of a carboxymethylaminomethyl (cmnm) group at the wobble position (U34) of certain tRNAs, forming tRNA-cmnm(5)s(2)U34. The sequence is that of tRNA modification GTPase MnmE from Prochlorococcus marinus (strain MIT 9215).